Reading from the N-terminus, the 211-residue chain is FMN-dependent NADH:quinone oxidoreductase 3 (211 aa).

17–19 (SFS) contacts FMN.

This sequence belongs to the azoreductase type 1 family. Homodimer. FMN serves as cofactor.

The catalysed reaction is 2 a quinone + NADH + H(+) = 2 a 1,4-benzosemiquinone + NAD(+). It carries out the reaction N,N-dimethyl-1,4-phenylenediamine + anthranilate + 2 NAD(+) = 2-(4-dimethylaminophenyl)diazenylbenzoate + 2 NADH + 2 H(+). Quinone reductase that provides resistance to thiol-specific stress caused by electrophilic quinones. In terms of biological role, also exhibits azoreductase activity. Catalyzes the reductive cleavage of the azo bond in aromatic azo compounds to the corresponding amines. The protein is FMN-dependent NADH:quinone oxidoreductase 3 of Halalkalibacterium halodurans (strain ATCC BAA-125 / DSM 18197 / FERM 7344 / JCM 9153 / C-125) (Bacillus halodurans).